The sequence spans 398 residues: Na(+)/H(+) antiporter NhaA (398 aa).

11 helical membrane-spanning segments follow: residues 19-39 (IGGI…NSPG), 64-84 (LLLW…GLEL), 99-119 (IILP…IYLA), 130-150 (GWAI…SLLG), 159-179 (ILLT…IACF), 182-202 (NDIY…LFIV), 222-242 (IAML…AMFI), 266-286 (ATFI…LTNI), 299-319 (IALG…WVGV), 337-357 (GMSA…SLAF), and 370-390 (LGII…LNKT).

This sequence belongs to the NhaA Na(+)/H(+) (TC 2.A.33) antiporter family.

Its subcellular location is the cell inner membrane. The enzyme catalyses Na(+)(in) + 2 H(+)(out) = Na(+)(out) + 2 H(+)(in). In terms of biological role, na(+)/H(+) antiporter that extrudes sodium in exchange for external protons. The sequence is that of Na(+)/H(+) antiporter NhaA from Desulfotalea psychrophila (strain LSv54 / DSM 12343).